The following is a 125-amino-acid chain: Large ribosomal subunit protein eL8 (125 aa).

The protein belongs to the eukaryotic ribosomal protein eL8 family. Part of the 50S ribosomal subunit. Probably part of the RNase P complex.

The protein localises to the cytoplasm. Functionally, multifunctional RNA-binding protein that recognizes the K-turn motif in ribosomal RNA, the RNA component of RNase P, box H/ACA, box C/D and box C'/D' sRNAs. The protein is Large ribosomal subunit protein eL8 of Nanoarchaeum equitans (strain Kin4-M).